The following is a 658-amino-acid chain: Glycogen debranching enzyme (658 aa).

Catalysis depends on Asp336, which acts as the Nucleophile. The active-site Proton donor is the Glu371. The tract at residues 459-484 is disordered; it reads EANGEENRDGTNSNYSDNHGKEGLGG.

Belongs to the glycosyl hydrolase 13 family.

It catalyses the reaction Hydrolysis of (1-&gt;6)-alpha-D-glucosidic linkages to branches with degrees of polymerization of three or four glucose residues in limit dextrin.. It participates in glycan degradation; glycogen degradation. Removes maltotriose and maltotetraose chains that are attached by 1,6-alpha-linkage to the limit dextrin main chain, generating a debranched limit dextrin. This Salmonella dublin (strain CT_02021853) protein is Glycogen debranching enzyme.